Consider the following 107-residue polypeptide: Small ribosomal subunit protein uS17 (107 aa).

The protein belongs to the universal ribosomal protein uS17 family. Part of the 30S ribosomal subunit.

One of the primary rRNA binding proteins, it binds specifically to the 5'-end of 16S ribosomal RNA. This chain is Small ribosomal subunit protein uS17, found in Thermotoga petrophila (strain ATCC BAA-488 / DSM 13995 / JCM 10881 / RKU-1).